We begin with the raw amino-acid sequence, 875 residues long: Outer membrane usher protein FocD (875 aa).

The signal sequence occupies residues 1 to 38 (MFFGDGGQLLSDKSLTGSAGGGNNRMKFNILPLAFFIG). An intrachain disulfide couples Cys-852 to Cys-874.

This sequence belongs to the fimbrial export usher family.

The protein resides in the cell outer membrane. Functionally, involved in the export and assembly of the F1C fimbriae subunits across the outer membrane. The chain is Outer membrane usher protein FocD (focD) from Escherichia coli.